The primary structure comprises 453 residues: AP-4 complex subunit mu-1 (453 aa).

Residues 184-452 form the MHD domain; the sequence is KNEVFLDVVE…LSHSDAYVIR (269 aa).

This sequence belongs to the adaptor complexes medium subunit family. Adaptor protein complex 4 (AP-4) is a heterotetramer composed of two large adaptins (epsilon-type subunit AP4E1 and beta-type subunit AP4B1), a medium adaptin (mu-type subunit AP4M1) and a small adaptin (sigma-type AP4S1). Interacts with tyrosine-based sorting signals on the cytoplasmic tail of cargo proteins such as APP, ATG9A, LAMP2 and NAGPA. Interacts with the C-terminal domain of GRID2. Interacts with GRIA1 and GRIA2; the interaction is indirect via CACNG3. Interacts with CACNG3; CACNG3 associates GRIA1 and GRIA2 with the adaptor protein complex 4 (AP-4) to target them to the somatodendritic compartment of neurons. Interacts with HOOK1 and HOOK2; the interactions are direct, mediate the interaction between FTS-Hook-FHIP (FHF) complex and AP-4 and the perinuclear distribution of AP-4. Ubiquitous. Highly expressed in testis and lowly expressed in brain and lung.

The protein localises to the golgi apparatus. It localises to the trans-Golgi network membrane. It is found in the early endosome. In terms of biological role, component of the adaptor protein complex 4 (AP-4). Adaptor protein complexes are vesicle coat components involved both in vesicle formation and cargo selection. They control the vesicular transport of proteins in different trafficking pathways. AP-4 forms a non clathrin-associated coat on vesicles departing the trans-Golgi network (TGN) and may be involved in the targeting of proteins from the trans-Golgi network (TGN) to the endosomal-lysosomal system. It is also involved in protein sorting to the basolateral membrane in epithelial cells and the proper asymmetric localization of somatodendritic proteins in neurons. Within AP-4, the mu-type subunit AP4M1 is directly involved in the recognition and binding of tyrosine-based sorting signals found in the cytoplasmic part of cargos. The adaptor protein complex 4 (AP-4) may also recognize other types of sorting signal. The protein is AP-4 complex subunit mu-1 of Homo sapiens (Human).